We begin with the raw amino-acid sequence, 393 residues long: CCA-adding enzyme (393 aa).

ATP contacts are provided by Gly27 and Arg30. Residues Gly27 and Arg30 each contribute to the CTP site. Residues Asp40 and Asp42 each coordinate Mg(2+). Arg111, Asp154, Arg157, Arg160, and Arg163 together coordinate ATP. 5 residues coordinate CTP: Arg111, Asp154, Arg157, Arg160, and Arg163.

It belongs to the tRNA nucleotidyltransferase/poly(A) polymerase family. Bacterial CCA-adding enzyme type 3 subfamily. Homodimer. Mg(2+) is required as a cofactor.

The enzyme catalyses a tRNA precursor + 2 CTP + ATP = a tRNA with a 3' CCA end + 3 diphosphate. The catalysed reaction is a tRNA with a 3' CCA end + 2 CTP + ATP = a tRNA with a 3' CCACCA end + 3 diphosphate. Catalyzes the addition and repair of the essential 3'-terminal CCA sequence in tRNAs without using a nucleic acid template. Adds these three nucleotides in the order of C, C, and A to the tRNA nucleotide-73, using CTP and ATP as substrates and producing inorganic pyrophosphate. tRNA 3'-terminal CCA addition is required both for tRNA processing and repair. Also involved in tRNA surveillance by mediating tandem CCA addition to generate a CCACCA at the 3' terminus of unstable tRNAs. While stable tRNAs receive only 3'-terminal CCA, unstable tRNAs are marked with CCACCA and rapidly degraded. This Listeria monocytogenes serotype 4a (strain HCC23) protein is CCA-adding enzyme.